The chain runs to 101 residues: A-type ATP synthase subunit F (101 aa).

The protein belongs to the V-ATPase F subunit family. Has multiple subunits with at least A(3), B(3), C, D, E, F, H, I and proteolipid K(x).

Its subcellular location is the cell membrane. In terms of biological role, component of the A-type ATP synthase that produces ATP from ADP in the presence of a proton gradient across the membrane. The chain is A-type ATP synthase subunit F from Archaeoglobus fulgidus (strain ATCC 49558 / DSM 4304 / JCM 9628 / NBRC 100126 / VC-16).